Here is a 474-residue protein sequence, read N- to C-terminus: MSDKVVTRFAPSPTGYLHIGGARTALFNWLYAKHTGGTMLLRIEDTDRERSTAAATAAILDGLSWLGLGWDGDAVSQFERAPRHREVAEELVRMGKAYYSYETPAELEAMREAARAKGLPPRYNGQWRDRTPSEAPAGVKGAIRIKAPTEGETIVHDRVQGEVRFPNKDLDDFIILRSDGNPTYMHAVVVDDHDMGVTHIIRGDDHLTNAARQTVIYNAMGWDVPSMSHIPLIHGADGAKLSKRHGALGVEAYRAMGYLPEALLNYLARLGWSHGDDEIMSIKDMISWFDIGDVNKGAARFDFAKLEAINGAHMRRMADAQLLDIFIATLPYLEGGPAMAARLNEHNKAQLLAALPGLKERAKTLVELVDGAAFLFATRPLPVDEKAALLLNDGARKILRGAHEALNALSGDWTAAAAEAAVRDYALAGGHKLGAVAQPLRAALTGKSTSPGVFDVLAVLGREESLARIADQID.

Residues 11 to 21 (PSPTGYLHIGG) carry the 'HIGH' region motif. Residues 240-244 (KLSKR) carry the 'KMSKS' region motif. Lys243 is an ATP binding site.

It belongs to the class-I aminoacyl-tRNA synthetase family. Glutamate--tRNA ligase type 1 subfamily. Monomer.

The protein localises to the cytoplasm. The catalysed reaction is tRNA(Glu) + L-glutamate + ATP = L-glutamyl-tRNA(Glu) + AMP + diphosphate. Its function is as follows. Catalyzes the attachment of glutamate to tRNA(Glu) in a two-step reaction: glutamate is first activated by ATP to form Glu-AMP and then transferred to the acceptor end of tRNA(Glu). In Mesorhizobium japonicum (strain LMG 29417 / CECT 9101 / MAFF 303099) (Mesorhizobium loti (strain MAFF 303099)), this protein is Glutamate--tRNA ligase 1.